The following is a 1040-amino-acid chain: Kinesin-like protein KIN-14H (1040 aa).

Residues 54-176 enclose the Calponin-homology (CH) domain; that stretch reads DLRRYEAARW…CVLALKSYRE (123 aa). The interval 208-242 is disordered; it reads SEVPVDAVTNSPSSTPSSEQPLLDQSDSNTKNDGT. A compositionally biased stretch (polar residues) spans 215-242; that stretch reads VTNSPSSTPSSEQPLLDQSDSNTKNDGT. The Kinesin motor domain maps to 434-754; that stretch reads SIRVYCRVRP…LKFAERVATV (321 aa). ATP is bound at residue 517-524; that stretch reads GQTGSGKT. Residues 761 to 796 adopt a coiled-coil conformation; that stretch reads VNKDTSEVKELKEQIASLKLALARKESGADQTQLQR. Over residues 809–818 the composition is skewed to low complexity; the sequence is LGVSSSFSKS. Disordered regions lie at residues 809 to 871, 887 to 926, and 969 to 1040; these read LGVS…GKEE, EDEI…KCNS, and MPRP…QNPK. Positions 840–851 are enriched in polar residues; the sequence is IEGQSDSASSLD. Positions 887–923 are enriched in basic and acidic residues; it reads EDEITRSSKPENRAHTQLEKRTSSLKREATRGVDKNK. Positions 1018-1031 are enriched in polar residues; the sequence is SPGQTSSRHNNSTV.

Belongs to the TRAFAC class myosin-kinesin ATPase superfamily. Kinesin family. KIN-14 subfamily.

The polypeptide is Kinesin-like protein KIN-14H (Arabidopsis thaliana (Mouse-ear cress)).